We begin with the raw amino-acid sequence, 263 residues long: Flagellar brake protein YcgR (263 aa).

Residues 1-21 (MAELSTPSPASPAPLDGGRGD) are disordered. Positions 133–250 (QRREFYRLQV…DTRIQRYIFK (118 aa)) constitute a PilZ domain.

This sequence belongs to the YcgR family. In terms of assembly, monomer. Interacts with the flagellar basal bodies.

It is found in the bacterial flagellum basal body. Functionally, acts as a flagellar brake, regulating swimming and swarming in a bis-(3'-5') cyclic diguanylic acid (c-di-GMP)-dependent manner. Binds 1 c-di-GMP dimer per subunit. Increasing levels of c-di-GMP lead to decreased motility. The chain is Flagellar brake protein YcgR from Thauera aminoaromatica.